A 362-amino-acid polypeptide reads, in one-letter code: S-adenosylmethionine decarboxylase proenzyme (362 aa).

Catalysis depends on residues Glu-11 and Glu-14. Ser-71 functions as the Schiff-base intermediate with substrate; via pyruvic acid in the catalytic mechanism. At Ser-71 the chain carries Pyruvic acid (Ser); by autocatalysis. Cys-85 (proton donor; for catalytic activity) is an active-site residue. Active-site proton acceptor; for processing activity residues include Ser-234 and His-247.

It belongs to the eukaryotic AdoMetDC family. Pyruvate is required as a cofactor. Is synthesized initially as an inactive proenzyme. Formation of the active enzyme involves a self-maturation process in which the active site pyruvoyl group is generated from an internal serine residue via an autocatalytic post-translational modification. Two non-identical subunits are generated from the proenzyme in this reaction, and the pyruvate is formed at the N-terminus of the alpha chain, which is derived from the carboxyl end of the proenzyme. The post-translation cleavage follows an unusual pathway, termed non-hydrolytic serinolysis, in which the side chain hydroxyl group of the serine supplies its oxygen atom to form the C-terminus of the beta chain, while the remainder of the serine residue undergoes an oxidative deamination to produce ammonia and the pyruvoyl group blocking the N-terminus of the alpha chain.

The catalysed reaction is S-adenosyl-L-methionine + H(+) = S-adenosyl 3-(methylsulfanyl)propylamine + CO2. The protein operates within amine and polyamine biosynthesis; S-adenosylmethioninamine biosynthesis; S-adenosylmethioninamine from S-adenosyl-L-methionine: step 1/1. This Ipomoea nil (Japanese morning glory) protein is S-adenosylmethionine decarboxylase proenzyme (SAMDC).